The chain runs to 1303 residues: Zinc finger CCCH domain-containing protein 4 (1303 aa).

A compositionally biased stretch (pro residues) spans 1–33 (MEAAPGTPPPPPSESPPPPSPPPPSTPSPPPCS). The interval 1–388 (MEAAPGTPPP…RDHDKPHQQS (388 aa)) is disordered. The segment covering 53-73 (DREDGELEEGELEDDGAEETQ) has biased composition (acidic residues). Residues Thr72 and Thr75 each carry the phosphothreonine modification. Phosphoserine occurs at positions 76, 92, and 94. A compositionally biased stretch (basic and acidic residues) spans 80 to 99 (ERSRKEKGEKHHSDSDEEKS). The stretch at 95–128 (DEEKSHRRLKRKRKKEREKEKRRSKKRRKSKHKR) forms a coiled coil. Over residues 100-130 (HRRLKRKRKKEREKEKRRSKKRRKSKHKRHA) the composition is skewed to basic residues. Residues 135–144 (DFSDFSDDSD) are compositionally biased toward acidic residues. At Tyr155 the chain carries Phosphotyrosine. Over residues 194–218 (EDYENEQYGEYEGDEEEDMGKEDYD) the composition is skewed to acidic residues. The span at 219-235 (DFTKELNQYRRAKEGSS) shows a compositional bias: basic and acidic residues. Basic residues predominate over residues 238-251 (RGSRGRGRGYRGRG). Gly residues predominate over residues 252 to 274 (SRGGSRGRGMGRGSRGRGRGSMG). The segment covering 278–304 (PEDEEDFYEEEMDYGESEEPMGDDDYD) has biased composition (acidic residues). The span at 305 to 321 (EYSKELNQYRRSKDSRG) shows a compositional bias: basic and acidic residues. Residues 323–346 (GLSRGRGRGSRGRGKGMGRGRGRG) are compositionally biased toward basic residues. The segment covering 358–369 (NDDEDFYDEDMG) has biased composition (acidic residues). Basic and acidic residues predominate over residues 377 to 388 (RSRDHDKPHQQS). 3 C3H1-type zinc fingers span residues 390-417 (KKGKVICKYFVEGRCTWGDHCNFSHDIE), 419-446 (PKKRELCKFYITGFCARAENCPYMHGDF), and 447-470 (PCKLYHTTGNCINGDDCMFSHDPL). Residues 486 to 496 (AEAGAEDEKEV) show a composition bias toward acidic residues. The interval 486–571 (AEAGAEDEKE…HEPLSPQQLQ (86 aa)) is disordered. Pro residues-rich tracts occupy residues 507 to 529 (LPKPPPGVGLLPTPPRPPGPQAP) and 539 to 558 (GGPPPPPPPPPPPPGPPQMP). Arg601 bears the Asymmetric dimethylarginine mark. Over residues 605 to 624 (PGGPPGPMGPGPNMGPPGPM) the composition is skewed to pro residues. Disordered regions lie at residues 605–685 (PGGP…SGMM), 710–955 (GLLG…PRSQ), and 996–1288 (PPVP…ASLK). Basic and acidic residues predominate over residues 630–650 (PDMHPDMHPDMHPDMHADMHA). Positions 659 to 673 (NPGPPMGPGGPPMMP) are enriched in pro residues. 2 stretches are compositionally biased toward basic and acidic residues: residues 717-739 (DYGHYEELPGEPGEHLFPEHPLE) and 782-795 (ERARRLAESSKQDR). A coiled-coil region spans residues 767–800 (RALYLRIQQKQQEEEERARRLAESSKQDRENEEG). 2 positions are modified to phosphoserine: Ser807 and Ser808. Residues 815–843 (SSVTSILKTLRQQTSSRPPASVGELSSSG) show a composition bias toward polar residues. Positions 860–875 (ADPRLSRDPRLTRHVE) are enriched in basic and acidic residues. Phosphoserine is present on residues Ser904, Ser907, and Ser908. The segment covering 904-918 (SLHSSPVGPSSSKGS) has biased composition (low complexity). Composition is skewed to polar residues over residues 1028 to 1038 (GASTDSSTQGA) and 1053 to 1062 (VNATGSSAAP). The span at 1067-1084 (KPSDPRVRKAPTDPRLQK) shows a compositional bias: basic and acidic residues. The segment covering 1097–1110 (PGPAEAPSPTASPS) has biased composition (low complexity). The residue at position 1104 (Ser1104) is a Phosphoserine. Thr1106 carries the phosphothreonine modification. Phosphoserine occurs at positions 1108, 1110, and 1114. A Phosphothreonine modification is found at Thr1118. The span at 1129–1139 (GGLGQGGGGGQ) shows a compositional bias: gly residues. A compositionally biased stretch (low complexity) spans 1224–1234 (KAAAAPAATTA). The segment covering 1235 to 1245 (TPPPEGAPPQP) has biased composition (pro residues). Residues 1259 to 1268 (VKQTPKTGSG) show a composition bias toward polar residues. Phosphoserine occurs at positions 1269 and 1275.

Belongs to the suppressor of sable family. As to quaternary structure, interacts with WDR82.

Its subcellular location is the chromosome. In terms of biological role, RNA-binding protein that suppresses transcription of long non-coding RNAs (lncRNAs). LncRNAs are defined as transcripts more than 200 nucleotides that are not translated into protein. Together with WDR82, part of a transcription termination checkpoint that promotes transcription termination of lncRNAs and their subsequent degradation by the exosome. The transcription termination checkpoint is activated by the inefficiently spliced first exon of lncRNAs. This is Zinc finger CCCH domain-containing protein 4 from Homo sapiens (Human).